Reading from the N-terminus, the 556-residue chain is (6-4)DNA photolyase (556 aa).

The Photolyase/cryptochrome alpha/beta domain maps to 24-162; the sequence is SGSLIWFRKG…EVFSPVSHTL (139 aa). Position 262 (glutamate 262) interacts with phosphate. FAD-binding positions include lysine 263, 276–280, 317–321, 380–383, arginine 386, 415–417, and asparagine 421; these read TTVMS, QLLWR, WMHH, and DSD. Tryptophan 320 contacts DNA. Residues 382–387 form an interaction with DNA region; it reads HHLARH. Tryptophan 427 is a DNA binding site. Positions 534–556 are disordered; sequence LRRKLQKDEHEESKIRNQRPKLK. The segment covering 539-548 has biased composition (basic and acidic residues); the sequence is QKDEHEESKI.

This sequence belongs to the DNA photolyase class-1 family. FAD serves as cofactor. In terms of tissue distribution, expressed in siliques, flowers and leaves. Not detected in roots.

It carries out the reaction (6-4) photoproduct (in DNA) = 2 pyrimidine residues (in DNA).. In terms of biological role, involved in repair of UV radiation-induced DNA damage. Catalyzes the photoreactivation of pyrimidine [6-4] pyrimidone photoproduct (6-4 products). Binds specifically to DNA containing 6-4 products and repairs these lesions in a visible light-dependent manner. Not required for repair of cyclobutane pyrimidine dimer (CPD). In Arabidopsis thaliana (Mouse-ear cress), this protein is (6-4)DNA photolyase (UVR3).